The following is a 407-amino-acid chain: MRQLLPGDTAWRNIRLATMDPQQQTPYGLVDNLALIVREGLICDIVPKTQIPVSGDNIHDMQGRLVTPGLIDCHTHLVFAGSRAGEWEQRLNGVSYQYISAQGGGINATVSATRACAEDTLYLLAHERMMRLINEGVTLLEIKSGYGLELATEEKMLRVAAKLAAENAIDISSTLLAAHATPVEYHGDPDGYIALVCETIIPQLWKKRLFEAVDLFCESVGFSVAHSERVLQTAKALGIPVKGHVEQLSLLGGAQLVSRYQGLSADHIEYLDEAGVAAMRDGGTVGVLLPGAFYFLGETQRPPVELLRRYQVPVAVASDFNPGTSPFCSLHLAMNMACVQFGLTPEEAWAGVTRHAARALGRQATHGQLRAGFRADFVVWDAEQPVEIVYEPGRNPLYQRVYQGQIT.

Residues histidine 74 and histidine 76 each contribute to the Fe(3+) site. The Zn(2+) site is built by histidine 74 and histidine 76. 3 residues coordinate 4-imidazolone-5-propanoate: arginine 83, tyrosine 146, and histidine 179. Tyrosine 146 provides a ligand contact to N-formimidoyl-L-glutamate. Histidine 244 contacts Fe(3+). Residue histidine 244 participates in Zn(2+) binding. Glutamine 247 is a binding site for 4-imidazolone-5-propanoate. Residue aspartate 319 coordinates Fe(3+). Aspartate 319 lines the Zn(2+) pocket. N-formimidoyl-L-glutamate is bound by residues asparagine 321 and glycine 323. Position 324 (threonine 324) interacts with 4-imidazolone-5-propanoate.

Belongs to the metallo-dependent hydrolases superfamily. HutI family. The cofactor is Zn(2+). Fe(3+) is required as a cofactor.

Its subcellular location is the cytoplasm. The catalysed reaction is 4-imidazolone-5-propanoate + H2O = N-formimidoyl-L-glutamate. It participates in amino-acid degradation; L-histidine degradation into L-glutamate; N-formimidoyl-L-glutamate from L-histidine: step 3/3. In terms of biological role, catalyzes the hydrolytic cleavage of the carbon-nitrogen bond in imidazolone-5-propanoate to yield N-formimidoyl-L-glutamate. It is the third step in the universal histidine degradation pathway. This is Imidazolonepropionase from Salmonella arizonae (strain ATCC BAA-731 / CDC346-86 / RSK2980).